A 135-amino-acid chain; its full sequence is ATP synthase epsilon chain (135 aa).

The segment covering aspartate 90 to serine 103 has biased composition (basic and acidic residues). A disordered region spans residues aspartate 90–asparagine 115.

It belongs to the ATPase epsilon chain family. F-type ATPases have 2 components, CF(1) - the catalytic core - and CF(0) - the membrane proton channel. CF(1) has five subunits: alpha(3), beta(3), gamma(1), delta(1), epsilon(1). CF(0) has three main subunits: a, b and c.

It is found in the cell membrane. Functionally, produces ATP from ADP in the presence of a proton gradient across the membrane. This is ATP synthase epsilon chain from Staphylococcus carnosus (strain TM300).